We begin with the raw amino-acid sequence, 273 residues long: Bidirectional sugar transporter SWEET1a (273 aa).

At 1-6 the chain is on the extracellular side; it reads MEHIAR. A helical transmembrane segment spans residues 7-27; that stretch reads FFFGVSGNVIALFLFLSPVVT. One can recognise a MtN3/slv 1 domain in the interval 7–95; it reads FFFGVSGNVI…VIFLIFAERK (89 aa). Residues 28-42 are Cytoplasmic-facing; the sequence is FWRIIKKRSTEDFSG. A helical transmembrane segment spans residues 43 to 63; sequence VPYNMTLLNCLLSAWYGLPFV. Residues 64–71 lie on the Extracellular side of the membrane; it reads SPNNILVT. A helical membrane pass occupies residues 72–92; the sequence is TINGTGSVIEAIYVVIFLIFA. The Cytoplasmic portion of the chain corresponds to 93–101; that stretch reads ERKARLKMM. The chain crosses the membrane as a helical span at residues 102–122; sequence GLLGLVTSIFTMVVLVSLLAL. At 123–128 the chain is on the extracellular side; sequence HGQGRK. The chain crosses the membrane as a helical span at residues 129–149; the sequence is LFCGLAATIFSICMYASPLSI. The MtN3/slv 2 domain occupies 131 to 214; the sequence is CGLAATIFSI…ILYAIYRNHK (84 aa). The Cytoplasmic portion of the chain corresponds to 150-163; sequence MRLVIKTKSVEFMP. The chain crosses the membrane as a helical span at residues 164-184; the sequence is FLLSLSVFLCGTSWFIYGLLG. At 185-188 the chain is on the extracellular side; it reads RDPF. A helical membrane pass occupies residues 189 to 209; that stretch reads IAIPNGCGSFLGLMQLILYAI. Residues 210–273 lie on the Cytoplasmic side of the membrane; it reads YRNHKGATPA…SADDKVASQV (64 aa).

The protein belongs to the SWEET sugar transporter family. Forms homooligomers and/or heterooligomers.

It is found in the cell membrane. Functionally, mediates both low-affinity uptake and efflux of sugar across the plasma membrane. This is Bidirectional sugar transporter SWEET1a (SWEET1A) from Oryza sativa subsp. japonica (Rice).